The sequence spans 283 residues: Thymidylate synthase (283 aa).

Arginine 22 lines the dUMP pocket. The active-site Nucleophile is the cysteine 160. DUMP contacts are provided by residues 180 to 183 (RSCD), asparagine 191, and 221 to 223 (HIY). Aspartate 183 is a binding site for (6R)-5,10-methylene-5,6,7,8-tetrahydrofolate. (6R)-5,10-methylene-5,6,7,8-tetrahydrofolate is bound at residue serine 282.

The protein belongs to the thymidylate synthase family. Bacterial-type ThyA subfamily. Homodimer.

It is found in the cytoplasm. It catalyses the reaction dUMP + (6R)-5,10-methylene-5,6,7,8-tetrahydrofolate = 7,8-dihydrofolate + dTMP. Its pathway is pyrimidine metabolism; dTTP biosynthesis. Its function is as follows. Catalyzes the reductive methylation of 2'-deoxyuridine-5'-monophosphate (dUMP) to 2'-deoxythymidine-5'-monophosphate (dTMP) while utilizing 5,10-methylenetetrahydrofolate (mTHF) as the methyl donor and reductant in the reaction, yielding dihydrofolate (DHF) as a by-product. This enzymatic reaction provides an intracellular de novo source of dTMP, an essential precursor for DNA biosynthesis. This is Thymidylate synthase from Shewanella sediminis (strain HAW-EB3).